We begin with the raw amino-acid sequence, 183 residues long: ATP synthase subunit delta (183 aa).

Belongs to the ATPase delta chain family. In terms of assembly, F-type ATPases have 2 components, F(1) - the catalytic core - and F(0) - the membrane proton channel. F(1) has five subunits: alpha(3), beta(3), gamma(1), delta(1), epsilon(1). F(0) has three main subunits: a(1), b(2) and c(10-14). The alpha and beta chains form an alternating ring which encloses part of the gamma chain. F(1) is attached to F(0) by a central stalk formed by the gamma and epsilon chains, while a peripheral stalk is formed by the delta and b chains.

The protein resides in the cell inner membrane. Functionally, f(1)F(0) ATP synthase produces ATP from ADP in the presence of a proton or sodium gradient. F-type ATPases consist of two structural domains, F(1) containing the extramembraneous catalytic core and F(0) containing the membrane proton channel, linked together by a central stalk and a peripheral stalk. During catalysis, ATP synthesis in the catalytic domain of F(1) is coupled via a rotary mechanism of the central stalk subunits to proton translocation. Its function is as follows. This protein is part of the stalk that links CF(0) to CF(1). It either transmits conformational changes from CF(0) to CF(1) or is implicated in proton conduction. This Desulfosudis oleivorans (strain DSM 6200 / JCM 39069 / Hxd3) (Desulfococcus oleovorans) protein is ATP synthase subunit delta.